The sequence spans 326 residues: Immune-associated nucleotide-binding protein 4 (326 aa).

In terms of domain architecture, AIG1-type G spans 17 to 225 (EPIKNIVLVG…FTDEMHRKIQ (209 aa)). The interval 26–33 (GRTGNGKS) is G1. GTP-binding positions include 26–34 (GRTGNGKSA) and S47. The tract at residues 53–57 (GVTMK) is G2. Residues 75-78 (DTPG) form a G3 region. A G4 region spans residues 145 to 148 (TGGD). A G5 region spans residues 184–186 (DNR). Position 185 (N185) interacts with GTP. Residues 217–241 (TDEMHRKIQKEAETLREQQKEVESK) are a coiled coil.

The protein belongs to the TRAFAC class TrmE-Era-EngA-EngB-Septin-like GTPase superfamily. AIG1/Toc34/Toc159-like paraseptin GTPase family. IAN subfamily. In terms of tissue distribution, expressed in radicles of the germinating seeds.

The chain is Immune-associated nucleotide-binding protein 4 from Arabidopsis thaliana (Mouse-ear cress).